The sequence spans 338 residues: DNA-directed RNA polymerase subunit alpha (338 aa).

The segment at M1–E234 is alpha N-terminal domain (alpha-NTD). The segment at F250–Y338 is alpha C-terminal domain (alpha-CTD).

This sequence belongs to the RNA polymerase alpha chain family. As to quaternary structure, homodimer. The RNAP catalytic core consists of 2 alpha, 1 beta, 1 beta' and 1 omega subunit. When a sigma factor is associated with the core the holoenzyme is formed, which can initiate transcription.

The enzyme catalyses RNA(n) + a ribonucleoside 5'-triphosphate = RNA(n+1) + diphosphate. In terms of biological role, DNA-dependent RNA polymerase catalyzes the transcription of DNA into RNA using the four ribonucleoside triphosphates as substrates. The sequence is that of DNA-directed RNA polymerase subunit alpha from Xanthobacter autotrophicus (strain ATCC BAA-1158 / Py2).